Consider the following 244-residue polypeptide: tRNA (guanine-N(7)-)-methyltransferase (244 aa).

Positions 75, 100, 127, and 150 each coordinate S-adenosyl-L-methionine. D150 is an active-site residue. Substrate is bound by residues K154, D186, and 223 to 226 (TRFE).

It belongs to the class I-like SAM-binding methyltransferase superfamily. TrmB family.

It carries out the reaction guanosine(46) in tRNA + S-adenosyl-L-methionine = N(7)-methylguanosine(46) in tRNA + S-adenosyl-L-homocysteine. It participates in tRNA modification; N(7)-methylguanine-tRNA biosynthesis. Its function is as follows. Catalyzes the formation of N(7)-methylguanine at position 46 (m7G46) in tRNA. The chain is tRNA (guanine-N(7)-)-methyltransferase from Xylella fastidiosa (strain M23).